Reading from the N-terminus, the 119-residue chain is Large ribosomal subunit protein uL22 (119 aa).

It belongs to the universal ribosomal protein uL22 family. In terms of assembly, part of the 50S ribosomal subunit.

In terms of biological role, this protein binds specifically to 23S rRNA; its binding is stimulated by other ribosomal proteins, e.g. L4, L17, and L20. It is important during the early stages of 50S assembly. It makes multiple contacts with different domains of the 23S rRNA in the assembled 50S subunit and ribosome. The globular domain of the protein is located near the polypeptide exit tunnel on the outside of the subunit, while an extended beta-hairpin is found that lines the wall of the exit tunnel in the center of the 70S ribosome. In Rickettsia felis (strain ATCC VR-1525 / URRWXCal2) (Rickettsia azadi), this protein is Large ribosomal subunit protein uL22.